The primary structure comprises 579 residues: Putative ABC transporter ATP-binding protein VPA1482 (579 aa).

ABC transporter domains lie at 3–244 (IEFS…GIRE) and 299–533 (LEVR…ANLT). ATP contacts are provided by residues 37–44 (GPSGSGKS) and 332–339 (GKNGSGKS).

This sequence belongs to the ABC transporter superfamily.

It is found in the cell inner membrane. In terms of biological role, probably part of an ABC transporter complex. Responsible for energy coupling to the transport system. The polypeptide is Putative ABC transporter ATP-binding protein VPA1482 (Vibrio parahaemolyticus serotype O3:K6 (strain RIMD 2210633)).